The primary structure comprises 300 residues: Formamidopyrimidine-DNA glycosylase (300 aa).

P2 acts as the Schiff-base intermediate with DNA in catalysis. E3 serves as the catalytic Proton donor. The Proton donor; for beta-elimination activity role is filled by K60. DNA-binding residues include H108, R136, and R181. The FPG-type zinc finger occupies 266–300; the sequence is WVYSRAGQPCRICNTPLEKIKLAGRSTHFCPQCQK. R290 acts as the Proton donor; for delta-elimination activity in catalysis.

This sequence belongs to the FPG family. As to quaternary structure, monomer. Zn(2+) serves as cofactor.

The enzyme catalyses Hydrolysis of DNA containing ring-opened 7-methylguanine residues, releasing 2,6-diamino-4-hydroxy-5-(N-methyl)formamidopyrimidine.. The catalysed reaction is 2'-deoxyribonucleotide-(2'-deoxyribose 5'-phosphate)-2'-deoxyribonucleotide-DNA = a 3'-end 2'-deoxyribonucleotide-(2,3-dehydro-2,3-deoxyribose 5'-phosphate)-DNA + a 5'-end 5'-phospho-2'-deoxyribonucleoside-DNA + H(+). Its function is as follows. Involved in base excision repair of DNA damaged by oxidation or by mutagenic agents. Acts as a DNA glycosylase that recognizes and removes damaged bases. Has a preference for oxidized purines, such as 7,8-dihydro-8-oxoguanine (8-oxoG). Has AP (apurinic/apyrimidinic) lyase activity and introduces nicks in the DNA strand. Cleaves the DNA backbone by beta-delta elimination to generate a single-strand break at the site of the removed base with both 3'- and 5'-phosphates. The protein is Formamidopyrimidine-DNA glycosylase of Trichodesmium erythraeum (strain IMS101).